The chain runs to 318 residues: Gamma-glutamyl hydrolase (318 aa).

Residues 1-24 (MARLGRLLSVLGLVLCGATGLGLS) form the signal peptide. The region spanning 25-318 (APPAPTPKKP…SSFQQSYIFD (294 aa)) is the Gamma-glutamyl hydrolase domain. N-linked (GlcNAc...) asparagine glycosylation occurs at asparagine 116. Catalysis depends on cysteine 134, which acts as the Nucleophile. Residues asparagine 163 and asparagine 203 are each glycosylated (N-linked (GlcNAc...) asparagine). The active-site Proton donor is histidine 244. Asparagine 307 is a glycosylation site (N-linked (GlcNAc...) asparagine).

The protein belongs to the peptidase C26 family. Homodimer.

The protein localises to the secreted. It is found in the extracellular space. The protein resides in the lysosome. It localises to the melanosome. It catalyses the reaction (6S)-5,6,7,8-tetrahydrofolyl-(gamma-L-Glu)(n) + (n-1) H2O = (6S)-5,6,7,8-tetrahydrofolate + (n-1) L-glutamate. Functionally, hydrolyzes the polyglutamate sidechains of pteroylpolyglutamates. Progressively removes gamma-glutamyl residues from pteroylpoly-gamma-glutamate to yield pteroyl-alpha-glutamate (folic acid) and free glutamate. May play an important role in the bioavailability of dietary pteroylpolyglutamates and in the metabolism of pteroylpolyglutamates and antifolates. Exhibits either endo- or exopeptidase activity depending upon the tissue of origin. When secreted, it acts primarily as an endopeptidase. In Bos taurus (Bovine), this protein is Gamma-glutamyl hydrolase (GGH).